We begin with the raw amino-acid sequence, 204 residues long: uncharacterized protein (204 aa).

Residues 77 to 111 (APHGSRIPGRCRRSPRCSRRPGGSRLRGGTWTPRL) are disordered. Over residues 85–95 (GRCRRSPRCSR) the composition is skewed to basic residues. Low complexity predominate over residues 96 to 105 (RPGGSRLRGG).

This is an uncharacterized protein from Homo sapiens (Human).